The primary structure comprises 290 residues: MKPPEHSLIIISGLSGSGKSIALKTFEDLDYYCSDNLPVELLPHFLRRRLRVAELSDQRIAIGIDIRSGSNLSELDQWRHTAKHYNIKAHLLFFDASNETLLKRYADTRRRHPLSHLGLSLPEAIALERELTAPLREAAEAVIDTSTFNVHQLRRHVVTEFALTHSDKLSLLFESFAYKRGIPTEADFVFDARILPNPHWKPELRSLTGRDSNVRDYMEQQPDVILYLTQITEFLDTWLARLQADTRSYVTVAFGCTGGKHRSVYLAEQMARHAREKGWSEVATFHRELE.

13–20 (GLSGSGKS) contacts ATP. 65–68 (DIRS) provides a ligand contact to GTP.

The protein belongs to the RapZ-like family.

Functionally, displays ATPase and GTPase activities. The protein is Nucleotide-binding protein Xfasm12_0753 of Xylella fastidiosa (strain M12).